Reading from the N-terminus, the 83-residue chain is uncharacterized protein (83 aa).

This is an uncharacterized protein from Vaccinia virus (strain Copenhagen) (VACV).